The chain runs to 63 residues: Small ribosomal subunit protein bS21 (63 aa).

The protein belongs to the bacterial ribosomal protein bS21 family.

The sequence is that of Small ribosomal subunit protein bS21 from Phocaeicola vulgatus (strain ATCC 8482 / DSM 1447 / JCM 5826 / CCUG 4940 / NBRC 14291 / NCTC 11154) (Bacteroides vulgatus).